We begin with the raw amino-acid sequence, 331 residues long: Putative heat stress transcription factor A-6a (331 aa).

Residues 135 to 160 (RRGAGTGSTTPRAVNCGGGGGEGEVE) are disordered. Residues 156-238 (EGEVERLRRD…VERKKRRMLA (83 aa)) adopt a coiled-coil conformation. A hydrophobic repeat HR-A/B region spans residues 162–212 (LRRDKEALARELARLRRQQQEARAQLLDMERRVRGTERRQEQCTEFLARAL). A Nuclear localization signal motif is present at residues 230-235 (ERKKRR). A Nuclear export signal motif is present at residues 246–253 (LTFEALAL). An AHA1 motif is present at residues 270 to 279 (DMIWYELLGE). Residues 305–313 (AEPWEEMGE) carry the AHA2 motif.

This sequence belongs to the HSF family. Class A subfamily. Homotrimer. Post-translationally, exhibits temperature-dependent phosphorylation.

The protein localises to the cytoplasm. It is found in the nucleus. Its function is as follows. Transcriptional regulator that specifically binds DNA of heat shock promoter elements (HSE). The polypeptide is Putative heat stress transcription factor A-6a (HSFA6A) (Oryza sativa subsp. japonica (Rice)).